The following is a 392-amino-acid chain: Glycerophosphodiester phosphodiesterase GDPD5 (392 aa).

The signal sequence occupies residues 1–21; the sequence is MILTRCLPLIWLSLLTVCAAG. The region spanning 44-362 is the GP-PDE domain; that stretch reads PYNIAHRGSN…DFTGSLHNFQ (319 aa). N-linked (GlcNAc...) asparagine glycans are attached at residues Asn120, Asn239, Asn260, and Asn329.

This sequence belongs to the glycerophosphoryl diester phosphodiesterase family. Expressed in roots, rosette and cauline leaves, stems, flowers and siliques.

It is found in the secreted. Its subcellular location is the cell wall. The protein localises to the vacuole. The enzyme catalyses a sn-glycero-3-phosphodiester + H2O = an alcohol + sn-glycerol 3-phosphate + H(+). In Arabidopsis thaliana (Mouse-ear cress), this protein is Glycerophosphodiester phosphodiesterase GDPD5.